The sequence spans 246 residues: Osmotin-like protein TPM-1 (246 aa).

Residues 1–21 (MAYLRSSFVFFLLAFVTYTYA) form the signal peptide. 8 disulfide bridges follow: Cys-30–Cys-225, Cys-72–Cys-82, Cys-87–Cys-93, Cys-141–Cys-213, Cys-146–Cys-196, Cys-154–Cys-164, Cys-168–Cys-177, and Cys-178–Cys-183.

This sequence belongs to the thaumatin family.

The protein localises to the vacuole. The enzyme catalyses Endohydrolysis of (1-&gt;3)- or (1-&gt;4)-linkages in beta-D-glucans when the glucose residue whose reducing group is involved in the linkage to be hydrolyzed is itself substituted at C-3.. Antifungal protein that inhibits the growth of several phytopathogenic fungi (e.g. Trichothecium roseum, Fusarium oxysporum, Phytophthora citrophthora and Colletotrichum coccodes). May bind to beta-glucans and have beta-1,3-D-glucanase activity. In Solanum lycopersicum (Tomato), this protein is Osmotin-like protein TPM-1.